A 315-amino-acid chain; its full sequence is Voltage-dependent calcium channel gamma-3 subunit (315 aa).

4 helical membrane-spanning segments follow: residues 8–28, 104–124, 135–155, and 181–201; these read VQML…TIAV, SSVF…CVAA, ILSA…GIIV, and FGAF…HIYI. The segment at 232-252 is disordered; the sequence is RRRSSSRSTEPRSRDLSPISK. The residue at position 248 (serine 248) is a Phosphoserine.

The protein belongs to the PMP-22/EMP/MP20 family. CACNG subfamily. The L-type calcium channel is composed of five subunits: alpha-1, alpha-2/delta, beta and gamma. Acts as an auxiliary subunit for AMPA-selective glutamate receptors (AMPARs). Found in a complex with GRIA1, GRIA2, GRIA3, GRIA4, CNIH2, CNIH3, CACNG2, CACNG4, CACNG5, CACNG7 and CACNG8. Interacts with AP4M1 and GRIA1; associates GRIA1 with the adaptor protein complex 4 (AP-4) to target GRIA1 to the somatodendritic compartment of neurons.

The protein resides in the membrane. Its function is as follows. Regulates the trafficking and gating properties of AMPA-selective glutamate receptors (AMPARs). Promotes their targeting to the cell membrane and synapses and modulates their gating properties by slowing their rates of activation, deactivation and desensitization. Does not show subunit-specific AMPA receptor regulation and regulates all AMPAR subunits. Thought to stabilize the calcium channel in an inactivated (closed) state. The protein is Voltage-dependent calcium channel gamma-3 subunit (CACNG3) of Bos taurus (Bovine).